We begin with the raw amino-acid sequence, 259 residues long: Virulence plasmid ParA family protein pGP5-D (259 aa).

ATP is bound at residue Phe9 to Thr16.

This sequence belongs to the ParA family.

The protein is Virulence plasmid ParA family protein pGP5-D of Chlamydia psittaci (Chlamydophila psittaci).